Consider the following 230-residue polypeptide: Sugar fermentation stimulation protein homolog (230 aa).

Belongs to the SfsA family.

This is Sugar fermentation stimulation protein homolog from Pyrococcus furiosus (strain ATCC 43587 / DSM 3638 / JCM 8422 / Vc1).